We begin with the raw amino-acid sequence, 100 residues long: Small ribosomal subunit protein uS14c (100 aa).

Belongs to the universal ribosomal protein uS14 family. In terms of assembly, part of the 30S ribosomal subunit.

It localises to the plastid. Its subcellular location is the chloroplast. Functionally, binds 16S rRNA, required for the assembly of 30S particles. The polypeptide is Small ribosomal subunit protein uS14c (Trieres chinensis (Marine centric diatom)).